A 304-amino-acid chain; its full sequence is MRKVSISILFMLVSLTWGTTWLAMRIAVETIPPVFATGMRFMFAAPFLIIIAWLRKKTLLFPPGQRLFQFVICIFYFCIPFSLMIYGETYVNSGLAAIIFANMPVAVLIASVLFLNEKAKLMQIAGLTIAITALTGILLEETNTSTESHWQGITALISAVLIHAIIYTQCKKRSCTVSVITFNALPCLLAGLILSATGWFFERPQVSTFSVHSILATLYLGAFAGVFGILCYFALQQKANAFQASLVFLIFPLIAVSLEDYIYGYAISTHSMLLIIPLVIGIFLTLVARNLPVTSRCRDNSSQK.

Transmembrane regions (helical) follow at residues 4–24 (VSISILFMLVSLTWGTTWLAM), 34–54 (VFATGMRFMFAAPFLIIIAWL), 67–87 (LFQFVICIFYFCIPFSLMIYG), 95–115 (LAAIIFANMPVAVLIASVLFL), 119–139 (AKLMQIAGLTIAITALTGILL), 150–170 (WQGITALISAVLIHAIIYTQC), 180–200 (ITFNALPCLLAGLILSATGWF), 214–234 (ILATLYLGAFAGVFGILCYFA), 246–266 (LVFLIFPLIAVSLEDYIYGYA), and 267–287 (ISTHSMLLIIPLVIGIFLTLV). EamA domains lie at 15-139 (LTWG…GILL) and 161-287 (LIHA…LTLV).

Belongs to the EamA transporter family.

The protein resides in the cell membrane. The polypeptide is Protein PagO (pagO) (Salmonella typhimurium (strain LT2 / SGSC1412 / ATCC 700720)).